A 433-amino-acid chain; its full sequence is UDP-N-acetylglucosamine 1-carboxyvinyltransferase (433 aa).

34-35 is a binding site for phosphoenolpyruvate; that stretch reads KN. UDP-N-acetyl-alpha-D-glucosamine is bound at residue Arg-104. The active-site Proton donor is the Cys-128. The residue at position 128 (Cys-128) is a 2-(S-cysteinyl)pyruvic acid O-phosphothioketal. Positions 320 and 342 each coordinate UDP-N-acetyl-alpha-D-glucosamine.

This sequence belongs to the EPSP synthase family. MurA subfamily.

The protein resides in the cytoplasm. It catalyses the reaction phosphoenolpyruvate + UDP-N-acetyl-alpha-D-glucosamine = UDP-N-acetyl-3-O-(1-carboxyvinyl)-alpha-D-glucosamine + phosphate. Its pathway is cell wall biogenesis; peptidoglycan biosynthesis. Its function is as follows. Cell wall formation. Adds enolpyruvyl to UDP-N-acetylglucosamine. This is UDP-N-acetylglucosamine 1-carboxyvinyltransferase from Synechococcus sp. (strain CC9605).